Here is a 691-residue protein sequence, read N- to C-terminus: Protein 4.2 (691 aa).

Gly-2 carries N-myristoyl glycine lipidation. The band 3 binding stretch occupies residues 31 to 39 (LFVRRGQPF). Phosphoserine; by PKA is present on Ser-248.

Belongs to the transglutaminase superfamily. Transglutaminase family. As to quaternary structure, component of the ankyrin-1 complex in the erythrocyte, composed of ANK1, RHCE, RHAG, SLC4A1, EPB42, GYPA, GYPB and AQP1. Interacts with SLC4A1 (via the cytoplasmic domain); this interaction is mediated by the SLC4A1 Band 3-I dimer. Interacts with ANK1 (via ANK 1-13 repeats). Interacts with AQP1 (via the C-terminal). Post-translationally, both cAMP-dependent kinase (CAPK) and another kinase present in the red-blood cells seem to be able to phosphorylate EPB42.

It is found in the cell membrane. The protein resides in the cytoplasm. Its subcellular location is the cytoskeleton. Component of the ankyrin-1 complex, a multiprotein complex involved in the stability and shape of the erythrocyte membrane. This chain is Protein 4.2, found in Homo sapiens (Human).